A 513-amino-acid polypeptide reads, in one-letter code: Meiotically up-regulated gene 133 protein (513 aa).

Belongs to the UPF0300 family.

It is found in the golgi apparatus. It localises to the vacuole membrane. Has a role in meiosis. The chain is Meiotically up-regulated gene 133 protein (mug133) from Schizosaccharomyces pombe (strain 972 / ATCC 24843) (Fission yeast).